The sequence spans 331 residues: Olfactory receptor 6B3 (331 aa).

Residues 1 to 25 (MSGENVTRVGTFILVGFPTAPGLQY) are Extracellular-facing. N-linked (GlcNAc...) asparagine glycosylation occurs at Asn-5. Residues 26–46 (LLFLLFLLTYLFVLVENLAII) traverse the membrane as a helical segment. At 47–54 (LTVWSSTS) the chain is on the cytoplasmic side. Residues 55–75 (LHRPMYYFLSSMSFLEIWYVS) traverse the membrane as a helical segment. Topologically, residues 76 to 99 (DITPKMLEGFLLQQKRISFVGCMT) are extracellular. A disulfide bond links Cys-97 and Cys-189. A helical membrane pass occupies residues 100–120 (QLYFFSSLVCTECVLLASMAY). Residues 121–139 (DRYVAICHPLRYHVLVTPG) are Cytoplasmic-facing. Residues 140–160 (LCLQLVGFSFVSGFTISMIKV) form a helical membrane-spanning segment. The Extracellular portion of the chain corresponds to 161-196 (CFISSVTFCGSNVLNHFFCDISPILKLACTDFSTAE). A helical transmembrane segment spans residues 197-217 (LVDFILAFIILVFPLLATMLS). The Cytoplasmic portion of the chain corresponds to 218 to 237 (YAHITLAVLRIPSATGCWRA). Residues 238–258 (FFTCASHLTVVTVFYTALLFM) form a helical membrane-spanning segment. Residues 259 to 271 (YVRPQAIDSRSSN) lie on the Extracellular side of the membrane. A helical transmembrane segment spans residues 272–292 (KLISVLYTVITPILNPLIYCL). At 293–331 (RNKEFKNALKKAFGLTSCAVEGRLSSLLELHLQIHSQPL) the chain is on the cytoplasmic side.

Belongs to the G-protein coupled receptor 1 family.

It localises to the cell membrane. In terms of biological role, odorant receptor. In Homo sapiens (Human), this protein is Olfactory receptor 6B3 (OR6B3).